The following is a 559-amino-acid chain: Serine/threonine-protein kinase VRK1 (559 aa).

Residues 32-388 enclose the Protein kinase domain; the sequence is YIVGKQFATG…EDDDEEEEVI (357 aa). Residues 38–46 and Lys61 contribute to the ATP site; that span reads FATGGFGRI. Asp167 acts as the Proton acceptor in catalysis. Disordered stretches follow at residues 315–419 and 448–559; these read EAAQ…ATSD and SSCE…SSEV. Composition is skewed to polar residues over residues 405-418 and 449-460; these read RSFNLGMTSSTATS and SCESQYESNEPG. A compositionally biased stretch (basic and acidic residues) spans 533 to 542; the sequence is TSARYQEKRA. Residues 545–559 are compositionally biased toward polar residues; the sequence is NTKPTFDDSSCSSEV.

The protein belongs to the protein kinase superfamily. CK1 Ser/Thr protein kinase family. VRK subfamily. Post-translationally, autophosphorylates in vitro.

Its subcellular location is the nucleus. It is found in the cytoplasm. The protein localises to the cajal body. The enzyme catalyses L-seryl-[protein] + ATP = O-phospho-L-seryl-[protein] + ADP + H(+). It carries out the reaction L-threonyl-[protein] + ATP = O-phospho-L-threonyl-[protein] + ADP + H(+). In terms of biological role, serine/threonine kinase that phosphorylates baf-1, thus regulating the association of baf-1 with chromatin and nuclear membrane proteins during nuclear envelope formation. May act through the egl-17 signaling pathway. Essential in hermaphrodites for formation of the vulva, uterus, and uterine seam cells and for development and maintenance of the somatic gonad and thus the germ line. Acts to prevent cep-1 from triggering an inappropriate cell cycle arrest, thereby promoting germ cell proliferation. Regulates anchor cell polarity and the timing of anchor cell invasion through the basement membranes separating vulval and somatic gonadal cells during the L3 larval stage. The protein is Serine/threonine-protein kinase VRK1 of Caenorhabditis briggsae.